The sequence spans 66 residues: DNA-directed RNA polymerase subunit Rpo10 (66 aa).

Residues cysteine 7, cysteine 10, cysteine 44, and cysteine 45 each contribute to the Zn(2+) site.

The protein belongs to the archaeal Rpo10/eukaryotic RPB10 RNA polymerase subunit family. Part of the RNA polymerase complex. Zn(2+) is required as a cofactor.

Its subcellular location is the cytoplasm. The catalysed reaction is RNA(n) + a ribonucleoside 5'-triphosphate = RNA(n+1) + diphosphate. DNA-dependent RNA polymerase (RNAP) catalyzes the transcription of DNA into RNA using the four ribonucleoside triphosphates as substrates. The chain is DNA-directed RNA polymerase subunit Rpo10 from Pyrobaculum islandicum (strain DSM 4184 / JCM 9189 / GEO3).